The chain runs to 495 residues: ATP synthase subunit beta, chloroplastic (495 aa).

An ATP-binding site is contributed by 172 to 179 (GGAGVGKT).

This sequence belongs to the ATPase alpha/beta chains family. In terms of assembly, F-type ATPases have 2 components, CF(1) - the catalytic core - and CF(0) - the membrane proton channel. CF(1) has five subunits: alpha(3), beta(3), gamma(1), delta(1), epsilon(1). CF(0) has four main subunits: a(1), b(1), b'(1) and c(9-12).

Its subcellular location is the plastid. The protein localises to the chloroplast thylakoid membrane. It carries out the reaction ATP + H2O + 4 H(+)(in) = ADP + phosphate + 5 H(+)(out). Its function is as follows. Produces ATP from ADP in the presence of a proton gradient across the membrane. The catalytic sites are hosted primarily by the beta subunits. This chain is ATP synthase subunit beta, chloroplastic, found in Barnardia japonica (Chinese squill).